The chain runs to 431 residues: Argininosuccinate lyase (431 aa).

It belongs to the lyase 1 family. Argininosuccinate lyase subfamily.

The protein resides in the cytoplasm. It catalyses the reaction 2-(N(omega)-L-arginino)succinate = fumarate + L-arginine. The protein operates within amino-acid biosynthesis; L-arginine biosynthesis; L-arginine from L-ornithine and carbamoyl phosphate: step 3/3. In Stenotrophomonas maltophilia (strain K279a), this protein is Argininosuccinate lyase.